Here is a 464-residue protein sequence, read N- to C-terminus: Cysteine--tRNA ligase (464 aa).

Cysteine 30 contributes to the Zn(2+) binding site. The 'HIGH' region signature appears at 32-42 (MTVYDYCHIGH). Cysteine 214, histidine 239, and glutamate 243 together coordinate Zn(2+). The 'KMSKS' region motif lies at 271–275 (KMSKS). Position 274 (lysine 274) interacts with ATP.

Belongs to the class-I aminoacyl-tRNA synthetase family. Monomer. Zn(2+) is required as a cofactor.

Its subcellular location is the cytoplasm. It carries out the reaction tRNA(Cys) + L-cysteine + ATP = L-cysteinyl-tRNA(Cys) + AMP + diphosphate. The polypeptide is Cysteine--tRNA ligase (Janthinobacterium sp. (strain Marseille) (Minibacterium massiliensis)).